The chain runs to 282 residues: Pantothenate synthetase (282 aa).

30-37 (MGYFHEGH) is a binding site for ATP. The Proton donor role is filled by H37. A (R)-pantoate-binding site is contributed by Q61. Q61 serves as a coordination point for beta-alanine. 147–150 (GQKD) lines the ATP pocket. Residue Q153 participates in (R)-pantoate binding. Residues V176 and 184 to 187 (LSSR) each bind ATP.

The protein belongs to the pantothenate synthetase family. As to quaternary structure, homodimer.

The protein resides in the cytoplasm. It catalyses the reaction (R)-pantoate + beta-alanine + ATP = (R)-pantothenate + AMP + diphosphate + H(+). It participates in cofactor biosynthesis; (R)-pantothenate biosynthesis; (R)-pantothenate from (R)-pantoate and beta-alanine: step 1/1. Functionally, catalyzes the condensation of pantoate with beta-alanine in an ATP-dependent reaction via a pantoyl-adenylate intermediate. The protein is Pantothenate synthetase of Maridesulfovibrio salexigens (strain ATCC 14822 / DSM 2638 / NCIMB 8403 / VKM B-1763) (Desulfovibrio salexigens).